The sequence spans 387 residues: Aminodeoxyfutalosine synthase (387 aa).

One can recognise a Radical SAM core domain in the interval 52 to 279; sequence VHFNVNRHLN…ARTQMATGAE (228 aa). Residues cysteine 66, cysteine 70, and cysteine 73 each contribute to the [4Fe-4S] cluster site.

It belongs to the radical SAM superfamily. MqnE family. [4Fe-4S] cluster is required as a cofactor.

It catalyses the reaction 3-[(1-carboxyvinyl)-oxy]benzoate + S-adenosyl-L-methionine + H2O = 6-amino-6-deoxyfutalosine + hydrogencarbonate + L-methionine + H(+). It participates in quinol/quinone metabolism; menaquinone biosynthesis. Functionally, radical SAM enzyme that catalyzes the addition of the adenosyl radical to the double bond of 3-[(1-carboxyvinyl)oxy]benzoate, leading to aminodeoxyfutalosine (AFL), a key intermediate in the formation of menaquinone (MK, vitamin K2) from chorismate. This Streptomyces coelicolor (strain ATCC BAA-471 / A3(2) / M145) protein is Aminodeoxyfutalosine synthase.